The primary structure comprises 284 residues: MMTAIAPSQSGQRLALLIQYQGTHFHGWQRQVGQRTVQEVIEQAIASVVNHPVSVVAAGRTDTGVHAAGQVAHVTVNSPIPVHRWPGILNARLPADVVIRAAAAVPPDWHARFSALWRRYRYTLYTDPCPNIFLRPWTWHYYYAPLDVAKMAAVLQPLVGRHHLSAFHRSGSNRAHSWVEVQAVSCQRRGALVEIEVQASGFLYGMMRLLVGLLVQVGQGQRSPASFTEIWQQEQRHLVKYAAPPSGLCLLGVGYPESPFPLALCTEAMPQFQLASVCPELSIA.

D62 (nucleophile) is an active-site residue. Y120 is a binding site for substrate.

It belongs to the tRNA pseudouridine synthase TruA family. As to quaternary structure, homodimer.

It carries out the reaction uridine(38/39/40) in tRNA = pseudouridine(38/39/40) in tRNA. In terms of biological role, formation of pseudouridine at positions 38, 39 and 40 in the anticodon stem and loop of transfer RNAs. This is tRNA pseudouridine synthase A from Thermosynechococcus vestitus (strain NIES-2133 / IAM M-273 / BP-1).